The chain runs to 793 residues: Toll-like receptor 2 type-1 (793 aa).

Positions Met1 to Ala25 are cleaved as a signal peptide. The Extracellular portion of the chain corresponds to Ala26–Ser597. A disulfide bond links Cys41 and Cys47. Asn48 is a glycosylation site (N-linked (GlcNAc...) asparagine). LRR repeat units follow at residues Lys64–Lys85, Asn88–Ser109, Lys112–Pro133, Ser136–Ser157, Asn161–Gly182, and Phe185–Ser206. Residue Asn120 is glycosylated (N-linked (GlcNAc...) asparagine). N-linked (GlcNAc...) asparagine glycosylation is found at Asn161, Asn195, Asn254, and Asn325. The cysteines at positions 362 and 391 are disulfide-linked. 7 LRR repeats span residues Ser370 to Cys391, Ser397 to Ile418, Lys423 to Pro444, Asn446 to Thr467, Leu468 to Pro486, Phe487 to Pro508, and Asn509 to Ser530. An N-linked (GlcNAc...) asparagine glycan is attached at Asn402. The cysteines at positions 441 and 463 are disulfide-linked. Residue Asn451 is glycosylated (N-linked (GlcNAc...) asparagine). Positions Asn542 to Arg596 constitute an LRRCT domain. Residues Leu598 to Gly618 form a helical membrane-spanning segment. The Cytoplasmic segment spans residues Tyr619 to Ser793. The region spanning Ile648–Leu791 is the TIR domain.

The protein belongs to the Toll-like receptor family. In terms of assembly, binds MYD88 (via TIR domain). N-glycosylated. TLR2-1 is more heavily glycosylated than TLR2-2. In terms of tissue distribution, highly expressed in ovary. Detected at lower levels in heart, lung, gizzard and testis.

It is found in the membrane. Functionally, participates in the innate immune response to microbial agents. Acts via MYD88 and TRAF6, leading to NF-kappa-B activation, cytokine secretion and the inflammatory response. Does not respond to LPS and responds with less ability than TLR2-2 to mycoplasmal macrophage-activating lipopeptide-2kD (MALP-2). The sequence is that of Toll-like receptor 2 type-1 (TLR2-1) from Gallus gallus (Chicken).